A 293-amino-acid polypeptide reads, in one-letter code: 4-hydroxy-tetrahydrodipicolinate synthase (293 aa).

Pyruvate is bound at residue Thr44. Catalysis depends on Tyr132, which acts as the Proton donor/acceptor. The active-site Schiff-base intermediate with substrate is the Lys160. Ile204 lines the pyruvate pocket.

Belongs to the DapA family. In terms of assembly, homotetramer; dimer of dimers.

Its subcellular location is the cytoplasm. The catalysed reaction is L-aspartate 4-semialdehyde + pyruvate = (2S,4S)-4-hydroxy-2,3,4,5-tetrahydrodipicolinate + H2O + H(+). It functions in the pathway amino-acid biosynthesis; L-lysine biosynthesis via DAP pathway; (S)-tetrahydrodipicolinate from L-aspartate: step 3/4. Functionally, catalyzes the condensation of (S)-aspartate-beta-semialdehyde [(S)-ASA] and pyruvate to 4-hydroxy-tetrahydrodipicolinate (HTPA). The sequence is that of 4-hydroxy-tetrahydrodipicolinate synthase from Hyphomonas neptunium (strain ATCC 15444).